The primary structure comprises 312 residues: MKKKILMLVGPTAVGKTETSIALCQRLKGEIISADSMQLYRHMNIGTAKPSLEEQQGIPHHLIDIIEPDASFTVADFQSEAARLIDAITKRNKFPIVAGGTGLYINSLLYDMDFTSAVSNWNLRQKLQKDAQLYGNEYVYKKLQDIDPNAATKIHPNNVKRVIRALEVNYESGENFGDFKNDIEKNTCYEPLLIGLTRDRSELYERINYRVDQMIETGLIEEVKNLLDCGYTPELIAFKGLGYKEIIAYLEGQYDLEEAITILKRDTRRYAKRQLTWFNRYQEIQWYNLTDQSSSNIIEAILKNVEGYFNLS.

10–17 (GPTAVGKT) serves as a coordination point for ATP. 12-17 (TAVGKT) contacts substrate. The interval 35 to 38 (DSMQ) is interaction with substrate tRNA.

Belongs to the IPP transferase family. Monomer. Mg(2+) serves as cofactor.

The enzyme catalyses adenosine(37) in tRNA + dimethylallyl diphosphate = N(6)-dimethylallyladenosine(37) in tRNA + diphosphate. Its function is as follows. Catalyzes the transfer of a dimethylallyl group onto the adenine at position 37 in tRNAs that read codons beginning with uridine, leading to the formation of N6-(dimethylallyl)adenosine (i(6)A). This Alkaliphilus metalliredigens (strain QYMF) protein is tRNA dimethylallyltransferase.